The sequence spans 298 residues: Probable endonuclease 4 (298 aa).

9 residues coordinate Zn(2+): histidine 69, histidine 111, glutamate 146, aspartate 180, histidine 183, histidine 215, aspartate 228, histidine 230, and glutamate 260.

This sequence belongs to the AP endonuclease 2 family. Requires Zn(2+) as cofactor.

The enzyme catalyses Endonucleolytic cleavage to 5'-phosphooligonucleotide end-products.. In terms of biological role, endonuclease IV plays a role in DNA repair. It cleaves phosphodiester bonds at apurinic or apyrimidinic (AP) sites, generating a 3'-hydroxyl group and a 5'-terminal sugar phosphate. This is Probable endonuclease 4 from Bacillus cereus (strain AH820).